The primary structure comprises 62 residues: MDANASRVDPKLLELLVCPLTKGRLRYDAEAHELVSEKARLAYPIRDGVPIMLVSEARKIED.

Belongs to the UPF0434 family.

The polypeptide is UPF0434 protein NGR_c31900 (Sinorhizobium fredii (strain NBRC 101917 / NGR234)).